A 168-amino-acid chain; its full sequence is Ribosome maturation factor RimM (168 aa).

A PRC barrel domain is found at 94 to 167; the sequence is DGNYYHHQII…KVIIELLDGL (74 aa).

It belongs to the RimM family. Binds ribosomal protein uS19.

The protein resides in the cytoplasm. An accessory protein needed during the final step in the assembly of 30S ribosomal subunit, possibly for assembly of the head region. Essential for efficient processing of 16S rRNA. May be needed both before and after RbfA during the maturation of 16S rRNA. It has affinity for free ribosomal 30S subunits but not for 70S ribosomes. This is Ribosome maturation factor RimM from Ligilactobacillus salivarius (strain UCC118) (Lactobacillus salivarius).